The primary structure comprises 444 residues: Trigger factor (444 aa).

The region spanning 160-245 (DMQVTFDFEG…VKQVEKPKLP (86 aa)) is the PPIase FKBP-type domain.

It belongs to the FKBP-type PPIase family. Tig subfamily.

The protein resides in the cytoplasm. It catalyses the reaction [protein]-peptidylproline (omega=180) = [protein]-peptidylproline (omega=0). In terms of biological role, involved in protein export. Acts as a chaperone by maintaining the newly synthesized protein in an open conformation. Functions as a peptidyl-prolyl cis-trans isomerase. This chain is Trigger factor, found in Acinetobacter baumannii (strain AB0057).